The chain runs to 48 residues: MNKQRFLFAAKISGIHFLLSLTVAVLLAGLIFFVWYPFPYQKIMGNFK.

The sequence is that of Fimbrial assembly protein, serogroup F1 (fimB) from Dichelobacter nodosus (Bacteroides nodosus).